We begin with the raw amino-acid sequence, 498 residues long: Myocyte-specific enhancer factor 2A (498 aa).

Residues 3-57 (RKKIQITRIMDERNRQVTFTKRKFGLMKKAYELSVLCDCEIALIIFNSSNKLFQY) enclose the MADS-box domain. The segment at residues 58–86 (ASTDMDKVLLKYTEYNEPHESRTNSDIVE) is a DNA-binding region (mef2-type). A Phosphoserine; by CK2 modification is found at Ser-59. A phosphoserine mark is found at Ser-98 and Ser-108. Position 108 is a phosphothreonine (Ser-108). The interval 172 to 220 (LADSSMLSPPPATLHRNVSPGAPQRPPSTGSASGMLSTTDLTVPNGAGN) is disordered. Residues 198 to 220 (PSTGSASGMLSTTDLTVPNGAGN) show a composition bias toward polar residues. The residue at position 233 (Ser-233) is a Phosphoserine. A disordered region spans residues 240-268 (TGANSLGKVMPTKSPPPPGGGSLGMNSRK). N6-acetyllysine is present on Lys-247. Ser-253 carries the post-translational modification Phosphoserine. The required for interaction with MAPKs stretch occupies residues 264–281 (MNSRKPDLRVVIPPSSKG). The interval 287-294 (SEEEELEL) is beta domain. A phosphothreonine; by MAPK7 mark is found at Thr-310 and Thr-317. Thr-310 is subject to Phosphothreonine; by NLK. Residue Ser-353 is modified to Phosphoserine; by MAPK7. Over residues 388-400 (SNLSINTNQNINI) the composition is skewed to polar residues. The disordered stretch occupies residues 388–498 (SNLSINTNQN…KRMRMDTWVT (111 aa)). The residue at position 401 (Lys-401) is an N6-acetyllysine; alternate. A Glycyl lysine isopeptide (Lys-Gly) (interchain with G-Cter in SUMO); alternate cross-link involves residue Lys-401. Phosphoserine is present on Ser-406. Phosphothreonine is present on Thr-413. The segment covering 426–436 (QQPPPQPPQPQ) has biased composition (pro residues). The residue at position 444 (Ser-444) is a Phosphoserine. A compositionally biased stretch (low complexity) spans 444–457 (SPVDSLSSSSSSYD). Composition is skewed to basic and acidic residues over residues 458-468 (GSDREDPRGDF) and 479-498 (NTED…TWVT).

It belongs to the MEF2 family. Binds DNA as a homo- or heterodimer. Dimerizes with MEF2D. Interacts with HDAC7. Interacts with PIAS1; the interaction enhances sumoylation. Interacts with HDAC4, HDAC9 and SLC2A4RG. Interacts (via the N-terminal) with MAPK7; the interaction results in the phosphorylation and transcriptional activity of MEF2A. Constitutive phosphorylation on Ser-406 promotes Lys-401 sumoylation thus preventing acetylation at this site. Dephosphorylation on Ser-406 by PPP3CA upon neuron depolarization promotes a switch from sumoylation to acetylation on residue Lys-403 leading to inhibition of dendrite claw differentiation. Phosphorylation on Thr-312 and Thr-319 are the main sites involved in p38 MAPK signaling and activate transcription. Phosphorylated on these sites by MAPK14/p38alpha and MAPK11/p38beta, but not by MAPK13/p38delta nor by MAPK12/p38gamma. Phosphorylation on Ser-408 by CDK5 induced by neurotoxicity inhibits MEF2A transcriptional activation leading to apoptosis of cortical neurons. Phosphorylation on Thr-312, Thr-319 and Ser-355 can be induced by EGF. Isoform 3 is phosphorylated on Ser-98 and Thr-108. In terms of processing, sumoylation on Lys-401 is enhanced by PIAS1 and represses transcriptional activity. Phosphorylation on Ser-406 is required for sumoylation. Has no effect on nuclear location nor on DNA binding. Sumoylated with SUMO1 and, to a lesser extent with SUMO2 and SUMO3. PIASx facilitates sumoylation in postsynaptic dendrites in the cerebellar cortex and promotes their morphogenesis. Post-translationally, acetylation on Lys-401 activates transcriptional activity. Acetylated by p300 on several sites in diffentiating myocytes. Acetylation on Lys-4 increases DNA binding and transactivation. Hyperacetylation by p300 leads to enhanced cardiac myocyte growth and heart failure. Proteolytically cleaved in cerebellar granule neurons on several sites by caspase 3 and caspase 7 following neurotoxicity. Preferentially cleaves the CDK5-mediated hyperphosphorylated form which leads to neuron apoptosis and transcriptional inactivation. As to expression, widely expressed though mainly restricted to skeletal and cardiac muscle, brain, neurons and lymphocytes. Differentially expressed depending on if isoforms contain the beta domain or not, with the total expression of the beta domain-lacking isoforms vastly exceeding that of the beta domain-containing isoforms. Isoforms containing the beta domain are expressed primarily in skeletal and cardiac muscle and in brain. Also present in lung and testis. Splicing to include the beta domain is induced in differentiating myocytes. Isoforms lacking the beta domain are expressed less abundantly in skeletal muscle, brain and lymphocytes, and are uniquely found in ovary, liver, spleen and kidney. In embryos, the beta domain-containing and beta domain-lacking isoforms are equally expressed. Also expressed cerebellar granule neurons and other regions of the CNS. Highest levels in the olfactory bulb, cortex, hippocampus, thalamus and cerebellum.

Its subcellular location is the nucleus. In terms of biological role, transcriptional activator which binds specifically to the MEF2 element, 5'-YTA[AT](4)TAR-3', found in numerous muscle-specific genes. Also involved in the activation of numerous growth factor- and stress-induced genes. Mediates cellular functions not only in skeletal and cardiac muscle development, but also in neuronal differentiation and survival. Plays diverse roles in the control of cell growth, survival and apoptosis via p38 MAPK signaling in muscle-specific and/or growth factor-related transcription. In cerebellar granule neurons, phosphorylated and sumoylated MEF2A represses transcription of NUR77 promoting synaptic differentiation. Associates with chromatin to the ZNF16 promoter. The protein is Myocyte-specific enhancer factor 2A (Mef2a) of Mus musculus (Mouse).